Here is a 525-residue protein sequence, read N- to C-terminus: GMP synthase [glutamine-hydrolyzing] (525 aa).

The region spanning 9 to 207 (RILILDFGSQ…VLDICGCAAL (199 aa)) is the Glutamine amidotransferase type-1 domain. The active-site Nucleophile is cysteine 86. Residues histidine 181 and glutamate 183 contribute to the active site. A GMPS ATP-PPase domain is found at 208-400 (WTPSNIVDDA…LGLPYDMVYR (193 aa)). An ATP-binding site is contributed by 235–241 (SGGVDSS).

In terms of assembly, homodimer.

It carries out the reaction XMP + L-glutamine + ATP + H2O = GMP + L-glutamate + AMP + diphosphate + 2 H(+). It participates in purine metabolism; GMP biosynthesis; GMP from XMP (L-Gln route): step 1/1. Catalyzes the synthesis of GMP from XMP. The protein is GMP synthase [glutamine-hydrolyzing] of Pseudomonas aeruginosa (strain LESB58).